The following is a 341-amino-acid chain: Cell division protein FtsQ (341 aa).

Residues 1-126 (MTETDEGAPV…VARGVVRGLK (126 aa)) lie on the Cytoplasmic side of the membrane. Residues 127-147 (TLFATVMFSIAGFGLGLALYV) form a helical membrane-spanning segment. Over 148 to 341 (TPAMSVRNIV…VSSPDLPTVK (194 aa)) the chain is Extracellular. A POTRA domain is found at 151–219 (MSVRNIVVTG…SALRITIVER (69 aa)).

Belongs to the FtsQ/DivIB family. FtsQ subfamily.

Its subcellular location is the cell membrane. Essential cell division protein. This chain is Cell division protein FtsQ, found in Mycobacterium leprae (strain Br4923).